We begin with the raw amino-acid sequence, 542 residues long: Chaperonin GroEL (542 aa).

Residues 29–32 (TLGP), 86–90 (DGTTT), G413, 476–478 (NAA), and D492 contribute to the ATP site.

This sequence belongs to the chaperonin (HSP60) family. As to quaternary structure, forms a cylinder of 14 subunits composed of two heptameric rings stacked back-to-back. Interacts with the co-chaperonin GroES.

It is found in the cytoplasm. The enzyme catalyses ATP + H2O + a folded polypeptide = ADP + phosphate + an unfolded polypeptide.. Its function is as follows. Together with its co-chaperonin GroES, plays an essential role in assisting protein folding. The GroEL-GroES system forms a nano-cage that allows encapsulation of the non-native substrate proteins and provides a physical environment optimized to promote and accelerate protein folding. The sequence is that of Chaperonin GroEL from Streptococcus mutans serotype c (strain ATCC 700610 / UA159).